We begin with the raw amino-acid sequence, 304 residues long: Protease HtpX homolog (304 aa).

2 helical membrane passes run phenylalanine 19–phenylalanine 39 and leucine 41–tyrosine 61. Histidine 146 provides a ligand contact to Zn(2+). Glutamate 147 is an active-site residue. Histidine 150 contributes to the Zn(2+) binding site. The next 2 membrane-spanning stretches (helical) occupy residues valine 156–leucine 176 and asparagine 192–leucine 212. Glutamate 221 lines the Zn(2+) pocket.

It belongs to the peptidase M48B family. It depends on Zn(2+) as a cofactor.

Its subcellular location is the cell inner membrane. The sequence is that of Protease HtpX homolog from Dictyoglomus turgidum (strain DSM 6724 / Z-1310).